Here is a 566-residue protein sequence, read N- to C-terminus: Insulinoma-associated protein 2 (566 aa).

The interval 1-20 (MPRGFLVKRTKRTGGLYRVR) is SNAG domain. Residues 32-117 (QGAPPFLEEA…PSPSPAKPAG (86 aa)) are disordered. Over residues 103–113 (GPSPSPSPSPA) the composition is skewed to pro residues. Residues 263-283 (FICQLCKEQYADPFALAQHRC) form a C2H2-type 1; atypical zinc finger. A C2H2-type 2 zinc finger spans residues 291–313 (YRCPECDKVFSCPANLASHRRWH). Positions 310–418 (RRWHKPRPAA…RRVPVPGSTS (109 aa)) are disordered. The segment covering 318 to 348 (AAANAATVSSADGKPPSSSSSSSRDSGAIAS) has biased composition (low complexity). Basic and acidic residues predominate over residues 352–369 (EGKENSRIERTADQHPQA). 3 C2H2-type zinc fingers span residues 426-448 (FVCP…LSTH), 470-492 (FACP…RLWH), and 525-548 (FSCK…NKCH).

Expressed in heart, liver, skeletal muscle, kidney and pancreas, and, to a lesser extent, in brain, lung and spleen. In the pancreas, expressed in islet cells, including insulin- and glucagon-producing alpha- and beta-cells, but not in acinar cells (at protein level). Detected in adrenal glands, particularly in the deeper layer of the cortex (at protein level).

The protein localises to the cytoplasm. Its subcellular location is the nucleus. Functionally, may function as a growth suppressor or tumor suppressor in liver cells and in certain neurons. This chain is Insulinoma-associated protein 2 (INSM2), found in Homo sapiens (Human).